We begin with the raw amino-acid sequence, 422 residues long: Phospho-N-acetylmuramoyl-pentapeptide-transferase (422 aa).

Helical transmembrane passes span 28 to 48, 71 to 91, 95 to 115, 136 to 156, 208 to 228, 239 to 259, 279 to 299, 313 to 333, and 399 to 419; these read LMAI…FINL, VGVP…PCLL, LHNI…TLGF, IIGQ…SPSV, AQAV…TAVS, GMAA…AYVS, LVIF…YNAF, IGGI…IPIL, and KITV…IITL.

This sequence belongs to the glycosyltransferase 4 family. MraY subfamily. The cofactor is Mg(2+).

It localises to the cell inner membrane. It catalyses the reaction UDP-N-acetyl-alpha-D-muramoyl-L-alanyl-gamma-D-glutamyl-meso-2,6-diaminopimeloyl-D-alanyl-D-alanine + di-trans,octa-cis-undecaprenyl phosphate = di-trans,octa-cis-undecaprenyl diphospho-N-acetyl-alpha-D-muramoyl-L-alanyl-D-glutamyl-meso-2,6-diaminopimeloyl-D-alanyl-D-alanine + UMP. It functions in the pathway cell wall biogenesis; peptidoglycan biosynthesis. In terms of biological role, catalyzes the initial step of the lipid cycle reactions in the biosynthesis of the cell wall peptidoglycan: transfers peptidoglycan precursor phospho-MurNAc-pentapeptide from UDP-MurNAc-pentapeptide onto the lipid carrier undecaprenyl phosphate, yielding undecaprenyl-pyrophosphoryl-MurNAc-pentapeptide, known as lipid I. This is Phospho-N-acetylmuramoyl-pentapeptide-transferase from Phocaeicola vulgatus (strain ATCC 8482 / DSM 1447 / JCM 5826 / CCUG 4940 / NBRC 14291 / NCTC 11154) (Bacteroides vulgatus).